We begin with the raw amino-acid sequence, 1461 residues long: Gag-Pol polyprotein (1461 aa).

Gly-2 carries N-myristoyl glycine; by host lipidation. The interaction with Gp41 stretch occupies residues Val-7–Leu-31. Positions Leu-16–Arg-22 match the Nuclear export signal motif. Positions Lys-26 to Lys-32 match the Nuclear localization signal motif. The segment at Asn-189–Gln-226 is interaction with human PPIA/CYPA and NUP153. A dimerization/Multimerization of capsid protein p24 region spans residues Tyr-277–Met-363. CCHC-type zinc fingers lie at residues Phe-387–Ala-404 and Gln-408–Asp-425. A disordered region spans residues Leu-436–Gly-467. Low complexity predominate over residues Asn-453–Gly-467. Positions Pro-511–Leu-515 are dimerization of protease. Residues Val-530–Val-599 enclose the Peptidase A2 domain. Asp-535 (for protease activity; shared with dimeric partner) is an active-site residue. Dimerization of protease stretches follow at residues Gly-559–Asn-565 and Asn-598–Pro-610. The region spanning Glu-653–Leu-843 is the Reverse transcriptase domain. 3 residues coordinate Mg(2+): Asp-719, Asp-794, and Asp-795. Positions Tyr-836 to Trp-844 are RT 'primer grip'. Residues Trp-1006–Trp-1022 carry the Tryptophan repeat motif motif. Residues Val-1042–Arg-1165 enclose the RNase H type-1 domain. The Mg(2+) site is built by Asp-1051, Glu-1086, Asp-1106, and Asp-1157. The segment at Glu-1171–Gln-1212 adopts an Integrase-type; degenerate zinc-finger fold. The Integrase catalytic domain occupies Gln-1221–Ile-1372. Positions 1232, 1284, and 1320 each coordinate Mg(2+). The integrase-type DNA-binding region spans Phe-1391–Asp-1438.

As to quaternary structure, homotrimer; further assembles as hexamers of trimers. Interacts with gp41 (via C-terminus). Interacts with host CALM1; this interaction induces a conformational change in the Matrix protein, triggering exposure of the myristate group. Interacts with host AP3D1; this interaction allows the polyprotein trafficking to multivesicular bodies during virus assembly. Part of the pre-integration complex (PIC) which is composed of viral genome, matrix protein, Vpr and integrase. In terms of assembly, homodimer; the homodimer further multimerizes as homohexamers or homopentamers. Interacts with human PPIA/CYPA. Interacts with human NUP153. Interacts with host PDZD8; this interaction stabilizes the capsid. Interacts with monkey TRIM5; this interaction destabilizes the capsid. Homodimer, whose active site consists of two apposed aspartic acid residues. As to quaternary structure, heterodimer of p66 RT and p51 RT (RT p66/p51). Heterodimerization of RT is essential for DNA polymerase activity. The overall folding of the subdomains is similar in p66 RT and p51 RT but the spatial arrangements of the subdomains are dramatically different. In terms of assembly, homotetramer; may further associate as a homohexadecamer. Part of the pre-integration complex (PIC) which is composed of viral genome, matrix protein, Vpr and integrase. Interacts with human SMARCB1/INI1 and human PSIP1/LEDGF isoform 1. Interacts with human KPNA3; this interaction might play a role in nuclear import of the pre-integration complex. Interacts with human NUP153; this interaction might play a role in nuclear import of the pre-integration complex. Mg(2+) is required as a cofactor. Specific enzymatic cleavages by the viral protease yield mature proteins. The protease is released by autocatalytic cleavage. The polyprotein is cleaved during and after budding, this process is termed maturation. Proteolytic cleavage of p66 RT removes the RNase H domain to yield the p51 RT subunit. Nucleocapsid protein p7 might be further cleaved after virus entry.

Its subcellular location is the host cell membrane. It localises to the host endosome. The protein resides in the host multivesicular body. The protein localises to the virion membrane. It is found in the host nucleus. Its subcellular location is the host cytoplasm. It localises to the virion. The enzyme catalyses Endopeptidase for which the P1 residue is preferably hydrophobic.. The catalysed reaction is Endohydrolysis of RNA in RNA/DNA hybrids. Three different cleavage modes: 1. sequence-specific internal cleavage of RNA. Human immunodeficiency virus type 1 and Moloney murine leukemia virus enzymes prefer to cleave the RNA strand one nucleotide away from the RNA-DNA junction. 2. RNA 5'-end directed cleavage 13-19 nucleotides from the RNA end. 3. DNA 3'-end directed cleavage 15-20 nucleotides away from the primer terminus.. It carries out the reaction 3'-end directed exonucleolytic cleavage of viral RNA-DNA hybrid.. It catalyses the reaction DNA(n) + a 2'-deoxyribonucleoside 5'-triphosphate = DNA(n+1) + diphosphate. With respect to regulation, protease: The viral protease is inhibited by many synthetic protease inhibitors (PIs), such as amprenavir, atazanavir, indinavir, loprinavir, nelfinavir, ritonavir and saquinavir. Use of protease inhibitors in tritherapy regimens permit more ambitious therapeutic strategies. Reverse transcriptase/ribonuclease H: RT can be inhibited either by nucleoside RT inhibitors (NRTIs) or by non nucleoside RT inhibitors (NNRTIs). NRTIs act as chain terminators, whereas NNRTIs inhibit DNA polymerization by binding a small hydrophobic pocket near the RT active site and inducing an allosteric change in this region. Classical NRTIs are abacavir, adefovir (PMEA), didanosine (ddI), lamivudine (3TC), stavudine (d4T), tenofovir (PMPA), zalcitabine (ddC), and zidovudine (AZT). Classical NNRTIs are atevirdine (BHAP U-87201E), delavirdine, efavirenz (DMP-266), emivirine (I-EBU), and nevirapine (BI-RG-587). The tritherapies used as a basic effective treatment of AIDS associate two NRTIs and one NNRTI. Mediates, with Gag polyprotein, the essential events in virion assembly, including binding the plasma membrane, making the protein-protein interactions necessary to create spherical particles, recruiting the viral Env proteins, and packaging the genomic RNA via direct interactions with the RNA packaging sequence (Psi). Gag-Pol polyprotein may regulate its own translation, by the binding genomic RNA in the 5'-UTR. At low concentration, the polyprotein would promote translation, whereas at high concentration, the polyprotein would encapsidate genomic RNA and then shut off translation. In terms of biological role, targets the polyprotein to the plasma membrane via a multipartite membrane-binding signal, that includes its myristoylated N-terminus. Matrix protein is part of the pre-integration complex. Implicated in the release from host cell mediated by Vpu. Binds to RNA. Its function is as follows. Forms the conical core that encapsulates the genomic RNA-nucleocapsid complex in the virion. Most core are conical, with only 7% tubular. The core is constituted by capsid protein hexamer subunits. The core is disassembled soon after virion entry. Host restriction factors such as TRIM5-alpha or TRIMCyp bind retroviral capsids and cause premature capsid disassembly, leading to blocks in reverse transcription. Capsid restriction by TRIM5 is one of the factors which restricts HIV-1 to the human species. Host PIN1 apparently facilitates the virion uncoating. On the other hand, interactions with PDZD8 or CYPA stabilize the capsid. Functionally, encapsulates and protects viral dimeric unspliced genomic RNA (gRNA). Binds these RNAs through its zinc fingers. Acts as a nucleic acid chaperone which is involved in rearangement of nucleic acid secondary structure during gRNA retrotranscription. Also facilitates template switch leading to recombination. As part of the polyprotein, participates in gRNA dimerization, packaging, tRNA incorporation and virion assembly. Aspartyl protease that mediates proteolytic cleavages of Gag and Gag-Pol polyproteins during or shortly after the release of the virion from the plasma membrane. Cleavages take place as an ordered, step-wise cascade to yield mature proteins. This process is called maturation. Displays maximal activity during the budding process just prior to particle release from the cell. Also cleaves Nef and Vif, probably concomitantly with viral structural proteins on maturation of virus particles. Hydrolyzes host EIF4GI and PABP1 in order to shut off the capped cellular mRNA translation. The resulting inhibition of cellular protein synthesis serves to ensure maximal viral gene expression and to evade host immune response. In terms of biological role, multifunctional enzyme that converts the viral RNA genome into dsDNA in the cytoplasm, shortly after virus entry into the cell. This enzyme displays a DNA polymerase activity that can copy either DNA or RNA templates, and a ribonuclease H (RNase H) activity that cleaves the RNA strand of RNA-DNA heteroduplexes in a partially processive 3' to 5' endonucleasic mode. Conversion of viral genomic RNA into dsDNA requires many steps. A tRNA(3)-Lys binds to the primer-binding site (PBS) situated at the 5'-end of the viral RNA. RT uses the 3' end of the tRNA primer to perform a short round of RNA-dependent minus-strand DNA synthesis. The reading proceeds through the U5 region and ends after the repeated (R) region which is present at both ends of viral RNA. The portion of the RNA-DNA heteroduplex is digested by the RNase H, resulting in a ssDNA product attached to the tRNA primer. This ssDNA/tRNA hybridizes with the identical R region situated at the 3' end of viral RNA. This template exchange, known as minus-strand DNA strong stop transfer, can be either intra- or intermolecular. RT uses the 3' end of this newly synthesized short ssDNA to perform the RNA-dependent minus-strand DNA synthesis of the whole template. RNase H digests the RNA template except for two polypurine tracts (PPTs) situated at the 5'-end and near the center of the genome. It is not clear if both polymerase and RNase H activities are simultaneous. RNase H probably can proceed both in a polymerase-dependent (RNA cut into small fragments by the same RT performing DNA synthesis) and a polymerase-independent mode (cleavage of remaining RNA fragments by free RTs). Secondly, RT performs DNA-directed plus-strand DNA synthesis using the PPTs that have not been removed by RNase H as primers. PPTs and tRNA primers are then removed by RNase H. The 3' and 5' ssDNA PBS regions hybridize to form a circular dsDNA intermediate. Strand displacement synthesis by RT to the PBS and PPT ends produces a blunt ended, linear dsDNA copy of the viral genome that includes long terminal repeats (LTRs) at both ends. Its function is as follows. Catalyzes viral DNA integration into the host chromosome, by performing a series of DNA cutting and joining reactions. This enzyme activity takes place after virion entry into a cell and reverse transcription of the RNA genome in dsDNA. The first step in the integration process is 3' processing. This step requires a complex comprising the viral genome, matrix protein, Vpr and integrase. This complex is called the pre-integration complex (PIC). The integrase protein removes 2 nucleotides from each 3' end of the viral DNA, leaving recessed CA OH's at the 3' ends. In the second step, the PIC enters cell nucleus. This process is mediated through integrase and Vpr proteins, and allows the virus to infect a non dividing cell. This ability to enter the nucleus is specific of lentiviruses, other retroviruses cannot and rely on cell division to access cell chromosomes. In the third step, termed strand transfer, the integrase protein joins the previously processed 3' ends to the 5' ends of strands of target cellular DNA at the site of integration. The 5'-ends are produced by integrase-catalyzed staggered cuts, 5 bp apart. A Y-shaped, gapped, recombination intermediate results, with the 5'-ends of the viral DNA strands and the 3' ends of target DNA strands remaining unjoined, flanking a gap of 5 bp. The last step is viral DNA integration into host chromosome. This involves host DNA repair synthesis in which the 5 bp gaps between the unjoined strands are filled in and then ligated. Since this process occurs at both cuts flanking the HIV genome, a 5 bp duplication of host DNA is produced at the ends of HIV-1 integration. Alternatively, Integrase may catalyze the excision of viral DNA just after strand transfer, this is termed disintegration. This is Gag-Pol polyprotein (gag-pol) from Homo sapiens (Human).